A 430-amino-acid chain; its full sequence is GTPase Obg (430 aa).

An Obg domain is found at 1-158 (MFVDQVKISL…LDVSLELKLL (158 aa)). The segment at 118–145 (KGGRGGRGNSRFATPRNPAPDFSEKGEP) is disordered. Residues 159–329 (ADVGLVGFPS…LLYAIADKLE (171 aa)) form the OBG-type G domain. Residues 165–172 (GFPSVGKS), 190–194 (FTTIK), 212–215 (DLPG), 282–285 (NKMD), and 310–312 (STI) each bind GTP. Mg(2+) is bound by residues serine 172 and threonine 192. The 79-residue stretch at 352-430 (KHTPSQDKFT…ILGGEFEFVE (79 aa)) folds into the OCT domain.

This sequence belongs to the TRAFAC class OBG-HflX-like GTPase superfamily. OBG GTPase family. In terms of assembly, monomer. Mg(2+) is required as a cofactor.

The protein localises to the cytoplasm. Functionally, an essential GTPase which binds GTP, GDP and possibly (p)ppGpp with moderate affinity, with high nucleotide exchange rates and a fairly low GTP hydrolysis rate. Plays a role in control of the cell cycle, stress response, ribosome biogenesis and in those bacteria that undergo differentiation, in morphogenesis control. In Staphylococcus aureus (strain bovine RF122 / ET3-1), this protein is GTPase Obg.